Reading from the N-terminus, the 372-residue chain is Glutamate 5-kinase (372 aa).

Lys-14 is a binding site for ATP. Substrate contacts are provided by Ser-54, Asp-141, and Asn-153. ATP-binding positions include 173-174 (TD) and 215-221 (TGGMATK). A PUA domain is found at 280 to 358 (RGKLILDQGA…DDIESLLGYD (79 aa)).

This sequence belongs to the glutamate 5-kinase family.

Its subcellular location is the cytoplasm. The enzyme catalyses L-glutamate + ATP = L-glutamyl 5-phosphate + ADP. The protein operates within amino-acid biosynthesis; L-proline biosynthesis; L-glutamate 5-semialdehyde from L-glutamate: step 1/2. Its function is as follows. Catalyzes the transfer of a phosphate group to glutamate to form L-glutamate 5-phosphate. The protein is Glutamate 5-kinase of Shewanella sediminis (strain HAW-EB3).